Consider the following 237-residue polypeptide: 6-carboxyhexanoate--CoA ligase (237 aa).

It belongs to the BioW family. As to quaternary structure, homodimer. Mg(2+) serves as cofactor.

The catalysed reaction is heptanedioate + ATP + CoA = 6-carboxyhexanoyl-CoA + AMP + diphosphate. It functions in the pathway metabolic intermediate metabolism; pimeloyl-CoA biosynthesis; pimeloyl-CoA from pimelate: step 1/1. Functionally, catalyzes the transformation of pimelate into pimeloyl-CoA with concomitant hydrolysis of ATP to AMP. This chain is 6-carboxyhexanoate--CoA ligase, found in Methanocaldococcus jannaschii (strain ATCC 43067 / DSM 2661 / JAL-1 / JCM 10045 / NBRC 100440) (Methanococcus jannaschii).